The primary structure comprises 28 residues: Cyclotide vodo I1 (28 aa).

Disulfide bonds link C4–C18, C8–C20, and C13–C25.

This is a cyclic peptide. In terms of processing, contains 3 disulfide bonds.

In terms of biological role, probably participates in a plant defense mechanism. This chain is Cyclotide vodo I1, found in Viola odorata (Sweet violet).